A 272-amino-acid polypeptide reads, in one-letter code: Acyl-[acyl-carrier-protein]--UDP-N-acetylglucosamine O-acyltransferase (272 aa).

This sequence belongs to the transferase hexapeptide repeat family. LpxA subfamily. Homotrimer.

It localises to the cytoplasm. The enzyme catalyses a (3R)-hydroxyacyl-[ACP] + UDP-N-acetyl-alpha-D-glucosamine = a UDP-3-O-[(3R)-3-hydroxyacyl]-N-acetyl-alpha-D-glucosamine + holo-[ACP]. It participates in glycolipid biosynthesis; lipid IV(A) biosynthesis; lipid IV(A) from (3R)-3-hydroxytetradecanoyl-[acyl-carrier-protein] and UDP-N-acetyl-alpha-D-glucosamine: step 1/6. Involved in the biosynthesis of lipid A, a phosphorylated glycolipid that anchors the lipopolysaccharide to the outer membrane of the cell. The protein is Acyl-[acyl-carrier-protein]--UDP-N-acetylglucosamine O-acyltransferase of Rhizobium johnstonii (strain DSM 114642 / LMG 32736 / 3841) (Rhizobium leguminosarum bv. viciae).